The sequence spans 318 residues: Protein OPG137 (318 aa).

The stretch at valine 145–serine 172 forms a coiled coil.

Belongs to the orthopoxvirus OPG137 family. As to quaternary structure, homomultimer. Interacts with OPG160. Post-translationally, phosphorylated by a OPG054-independent mechanism.

The protein resides in the host cytoplasm. Functionally, required for viral crescent formation early during virus morphogenesis. The polypeptide is Protein OPG137 (OPG137) (Vaccinia virus (strain Ankara) (VACV)).